A 283-amino-acid polypeptide reads, in one-letter code: MAPSPSKRKERSEDRAKERGKEKAPGKEVTEKDRGRDKAKKRRSGSSGSSSSSHSRSSSSSSSSSGSSSGSSSGSSSSASSRSGSSSSSRSSSSSSSSGSPSPSRRRHDNRRRSRSKSKQPKRDEKERKRRSPSPRPTKVHIGRLTRNVTKDHILEIFSTYGKIKMIDMPVDRYHPHLSKGYAYVEFEAPEEAEKALKHMDGGQIDGQEITASAVLTPWPMRPMPRRFSPPRRMLPPPPMWRRSPPRMRRRSRSPRRRSPVRRRSRSPARRRHRSRSSSNSSR.

2 disordered regions span residues 1-140 (MAPS…PTKV) and 221-283 (MRPM…NSSR). Basic and acidic residues predominate over residues 10–36 (ERSEDRAKERGKEKAPGKEVTEKDRGR). A compositionally biased stretch (low complexity) spans 45–103 (GSSGSSSSSHSRSSSSSSSSSGSSSGSSSGSSSSASSRSGSSSSSRSSSSSSSSGSPSP). Composition is skewed to basic residues over residues 104 to 120 (SRRR…KSKQ) and 128 to 140 (RKRR…PTKV). Residues 161-240 (YGKIKMIDMP…PRRMLPPPPM (80 aa)) enclose the RRM domain. Residues 244–276 (SPPRMRRRSRSPRRRSPVRRRSRSPARRRHRSR) are compositionally biased toward basic residues.

The protein belongs to the splicing factor SR family. Component of the active spliceosome.

Its subcellular location is the nucleus. It is found in the nucleus speckle. The protein localises to the cytoplasm. Component of a splicing-dependent multiprotein exon junction complex (EJC) deposited at splice junction on mRNAs. The EJC is a dynamic structure consisting of a few core proteins and several more peripheral nuclear and cytoplasmic associated factors that join the complex only transiently either during EJC assembly or during subsequent mRNA metabolism. Putative component of the spliceosome which enhances the formation of the ATP-dependent A complex of the spliceosome. May participate in mRNA 3'-end cleavage. Also mediates increase of mRNA abundance and translational efficiency. This Xenopus laevis (African clawed frog) protein is RNA-binding protein with serine-rich domain 1-A (rnps1-a).